Consider the following 441-residue polypeptide: MAEEKSYKYVIIGGGVAGGYAAREFSNQGLKPGELAIISKEPVPPFERPELTKVYIDLEVNPTLANIYVCAGTGEAKQYPNWYKEKGIDLIVGTEIVKADLASKTLVSDDGKIYKYQTLLIATGSTNIRLSEIGVQEADVKNIFYLREIEDSDELALAMELYVQRGKAVIIGGGFLGLEISSALRANNHEVTMVFPEPWLVHRFFTAEIASFYESYYANKGIKIIKGTVATGFSTNSDGEVTEVKLEDGRTLEANIVVAGVGARPATSLFKGQLEEEKGGIKTDGFFKTSVPDVYALGDVATFPMKMYGGTRRVEHADNARKSAAQAVKAIKAGEEGKTIPDYDYLPYFYSRFFKLSWEFYGENVGESVLFGDNDPKSPKPKFGTYWVKDGKVVGVFLEGGTQEEHKAIAKVARAQPSVESLDVLSEEGLSFATKFYSTSL.

Residues 14–17 (GGVA), glutamate 41, arginine 48, lysine 53, isoleucine 96, and 147–148 (RE) contribute to the FAD site. NAD(+) is bound by residues 173-179 (GGFLGLE), glutamate 197, arginine 203, and glycine 262. 175–179 (FLGLE) serves as a coordination point for NADP(+). Arginine 203 and glycine 262 together coordinate NADP(+). Aspartate 299 lines the FAD pocket. 315–316 (EH) is a binding site for NAD(+). An NADP(+)-binding site is contributed by 315–316 (EH). Arginine 321 is an L-ascorbate binding site. Tyrosine 350 contacts FAD. Tyrosine 350 provides a ligand contact to NAD(+). Tyrosine 350 is an NADP(+) binding site. L-ascorbate is bound at residue arginine 352. The residue at position 418 (serine 418) is a Phosphoserine.

It belongs to the FAD-dependent oxidoreductase family. FAD serves as cofactor.

It localises to the cytoplasm. It carries out the reaction 2 monodehydro-L-ascorbate radical + NADH + H(+) = 2 L-ascorbate + NAD(+). Functionally, catalyzes the conversion of monodehydroascorbate to ascorbate, oxidizing NADH in the process. Required for producing sufficient ascorbate to maintain the interaction between Piriformospora indica and Arabidopsis in a mutualistic state. This is Monodehydroascorbate reductase 3 from Arabidopsis thaliana (Mouse-ear cress).